Here is a 90-residue protein sequence, read N- to C-terminus: uncharacterized protein (90 aa).

Residues 1-26 (MFESEAELRRIRIALVWIAVFLLFGA) form the signal peptide.

This is an uncharacterized protein from Bacillus subtilis (strain 168).